The primary structure comprises 1134 residues: MMS19 nucleotide excision repair protein homolog (1134 aa).

HEAT repeat units lie at residues 959-998, 1002-1047, 1050-1089, and 1092-1130; these read QRCF…NVPV, LDNT…KGQQ, SDNA…LPHR, and YPFR…ITSG.

This sequence belongs to the MET18/MMS19 family. As to quaternary structure, part of a complex composed of AE7, CIA1, MMS19 and NAR1. Interacts with AE7.

The protein resides in the nucleus. It localises to the cytoplasm. Its function is as follows. May select specific target apoproteins to which a Fe-S cluster produced by the cytosolic iron-sulfur (Fe-S) protein assembly (CIA) pathway is transferred. The protein is MMS19 nucleotide excision repair protein homolog of Arabidopsis thaliana (Mouse-ear cress).